The sequence spans 750 residues: GRIP and coiled-coil domain-containing protein C27D7.02c (750 aa).

2 disordered regions span residues A14–M53 and K188–A280. Composition is skewed to basic and acidic residues over residues E18–R34 and K188–E198. Residues Q28–S182 are a coiled coil. Residues R201–L213 are compositionally biased toward polar residues. Residues L213–L243 are a coiled coil. The segment covering S214 to T230 has biased composition (basic residues). Residues N233–D251 show a composition bias toward polar residues. Positions A269 to A280 are enriched in basic and acidic residues. A coiled-coil region spans residues K344 to N665. Residues K672–M703 form a disordered region. Residues S676 to V693 are compositionally biased toward low complexity. Residues N694–M703 show a composition bias toward basic and acidic residues. Residues S700 to V748 form the GRIP domain.

It is found in the cytoplasm. The chain is GRIP and coiled-coil domain-containing protein C27D7.02c from Schizosaccharomyces pombe (strain 972 / ATCC 24843) (Fission yeast).